Here is a 152-residue protein sequence, read N- to C-terminus: SsrA-binding protein (152 aa).

It belongs to the SmpB family.

Its subcellular location is the cytoplasm. Functionally, required for rescue of stalled ribosomes mediated by trans-translation. Binds to transfer-messenger RNA (tmRNA), required for stable association of tmRNA with ribosomes. tmRNA and SmpB together mimic tRNA shape, replacing the anticodon stem-loop with SmpB. tmRNA is encoded by the ssrA gene; the 2 termini fold to resemble tRNA(Ala) and it encodes a 'tag peptide', a short internal open reading frame. During trans-translation Ala-aminoacylated tmRNA acts like a tRNA, entering the A-site of stalled ribosomes, displacing the stalled mRNA. The ribosome then switches to translate the ORF on the tmRNA; the nascent peptide is terminated with the 'tag peptide' encoded by the tmRNA and targeted for degradation. The ribosome is freed to recommence translation, which seems to be the essential function of trans-translation. This is SsrA-binding protein from Rickettsia akari (strain Hartford).